The chain runs to 353 residues: Quinolinate synthase (353 aa).

The iminosuccinate site is built by His47 and Ser68. Position 113 (Cys113) interacts with [4Fe-4S] cluster. Iminosuccinate-binding positions include Tyr139 to Asn141 and Ser156. Cys200 is a [4Fe-4S] cluster binding site. Residues His226–Glu228 and Thr243 contribute to the iminosuccinate site. Cys297 is a binding site for [4Fe-4S] cluster.

The protein belongs to the quinolinate synthase family. Type 1 subfamily. Requires [4Fe-4S] cluster as cofactor.

The protein localises to the cytoplasm. It carries out the reaction iminosuccinate + dihydroxyacetone phosphate = quinolinate + phosphate + 2 H2O + H(+). Its pathway is cofactor biosynthesis; NAD(+) biosynthesis; quinolinate from iminoaspartate: step 1/1. Its function is as follows. Catalyzes the condensation of iminoaspartate with dihydroxyacetone phosphate to form quinolinate. The polypeptide is Quinolinate synthase (Vibrio campbellii (strain ATCC BAA-1116)).